The sequence spans 185 residues: Ribosome-recycling factor (185 aa).

Belongs to the RRF family.

The protein resides in the cytoplasm. Its function is as follows. Responsible for the release of ribosomes from messenger RNA at the termination of protein biosynthesis. May increase the efficiency of translation by recycling ribosomes from one round of translation to another. This chain is Ribosome-recycling factor, found in Chloroflexus aurantiacus (strain ATCC 29364 / DSM 637 / Y-400-fl).